The following is a 146-amino-acid chain: Leghemoglobin 1 (146 aa).

Positions 2-146 (GFTEKQEALV…LAAAIKKAMG (145 aa)) constitute a Globin domain. A Nitrated tyrosine modification is found at Y29. S44 is a binding site for heme b. The residue at position 44 (S44) is a Phosphoserine. H61 lines the O2 pocket. Heme b-binding residues include K64, H93, and K96. Y134 bears the Nitrated tyrosine mark.

It belongs to the plant globin family. In terms of assembly, monomer. In terms of processing, nitrated in effective nodules and particularly in hypoxic conditions; this mechanism may play a protective role in the symbiosis by buffering toxic peroxynitrite NO(2)(-). Nitration level decrease during nodule senescence. Phosphorylation at Ser-44 disrupts the molecular environment of its porphyrin ring oxygen binding pocket, thus leading to a reduced oxygen consumption and to the delivery of oxygen O(2) to symbiosomes. Root nodules.

The protein resides in the cytoplasm. It is found in the cytosol. It localises to the nucleus. Functionally, leghemoglobin that reversibly binds oxygen O(2) through a pentacoordinated heme iron. In root nodules, facilitates the diffusion of oxygen to the bacteroids while preventing the bacterial nitrogenase from being inactivated by buffering dioxygen, nitric oxide and carbon monoxide, and promoting the formation of reactive oxygen species (ROS, e.g. H(2)O(2)). This role is essential for symbiotic nitrogen fixation (SNF). This chain is Leghemoglobin 1, found in Medicago truncatula (Barrel medic).